The following is a 122-amino-acid chain: Large ribosomal subunit protein uL14 (122 aa).

Belongs to the universal ribosomal protein uL14 family. As to quaternary structure, part of the 50S ribosomal subunit. Forms a cluster with proteins L3 and L19. In the 70S ribosome, L14 and L19 interact and together make contacts with the 16S rRNA in bridges B5 and B8.

In terms of biological role, binds to 23S rRNA. Forms part of two intersubunit bridges in the 70S ribosome. This is Large ribosomal subunit protein uL14 from Sphingopyxis alaskensis (strain DSM 13593 / LMG 18877 / RB2256) (Sphingomonas alaskensis).